Here is an 89-residue protein sequence, read N- to C-terminus: Putative membrane protein insertion efficiency factor (89 aa).

Positions 69–89 are disordered; that stretch reads DPVPPAHTERGGTMCPSRLPE.

The protein belongs to the UPF0161 family.

It localises to the cell inner membrane. Functionally, could be involved in insertion of integral membrane proteins into the membrane. The protein is Putative membrane protein insertion efficiency factor of Paramagnetospirillum magneticum (strain ATCC 700264 / AMB-1) (Magnetospirillum magneticum).